The following is a 99-amino-acid chain: MSQISRDEVAHLARLARLALTDSELDSFAGQLDAILGHVGQIQTVDVTGVEATGNPLKDVNVFRPDVEAPSLTQEQALAAAPNTDEGRFAVPRILGEAE.

This sequence belongs to the GatC family. As to quaternary structure, heterotrimer of A, B and C subunits.

It catalyses the reaction L-glutamyl-tRNA(Gln) + L-glutamine + ATP + H2O = L-glutaminyl-tRNA(Gln) + L-glutamate + ADP + phosphate + H(+). The enzyme catalyses L-aspartyl-tRNA(Asn) + L-glutamine + ATP + H2O = L-asparaginyl-tRNA(Asn) + L-glutamate + ADP + phosphate + 2 H(+). In terms of biological role, allows the formation of correctly charged Asn-tRNA(Asn) or Gln-tRNA(Gln) through the transamidation of misacylated Asp-tRNA(Asn) or Glu-tRNA(Gln) in organisms which lack either or both of asparaginyl-tRNA or glutaminyl-tRNA synthetases. The reaction takes place in the presence of glutamine and ATP through an activated phospho-Asp-tRNA(Asn) or phospho-Glu-tRNA(Gln). In Mycolicibacterium vanbaalenii (strain DSM 7251 / JCM 13017 / BCRC 16820 / KCTC 9966 / NRRL B-24157 / PYR-1) (Mycobacterium vanbaalenii), this protein is Aspartyl/glutamyl-tRNA(Asn/Gln) amidotransferase subunit C.